Consider the following 257-residue polypeptide: Imidazole glycerol phosphate synthase subunit HisF (257 aa).

Residues Asp12 and Asp131 contribute to the active site.

This sequence belongs to the HisA/HisF family. Heterodimer of HisH and HisF.

It is found in the cytoplasm. It carries out the reaction 5-[(5-phospho-1-deoxy-D-ribulos-1-ylimino)methylamino]-1-(5-phospho-beta-D-ribosyl)imidazole-4-carboxamide + L-glutamine = D-erythro-1-(imidazol-4-yl)glycerol 3-phosphate + 5-amino-1-(5-phospho-beta-D-ribosyl)imidazole-4-carboxamide + L-glutamate + H(+). It participates in amino-acid biosynthesis; L-histidine biosynthesis; L-histidine from 5-phospho-alpha-D-ribose 1-diphosphate: step 5/9. In terms of biological role, IGPS catalyzes the conversion of PRFAR and glutamine to IGP, AICAR and glutamate. The HisF subunit catalyzes the cyclization activity that produces IGP and AICAR from PRFAR using the ammonia provided by the HisH subunit. The polypeptide is Imidazole glycerol phosphate synthase subunit HisF (Burkholderia mallei (strain NCTC 10247)).